Here is a 500-residue protein sequence, read N- to C-terminus: Tektin-like protein 1 (500 aa).

The disordered stretch occupies residues 1–25; the sequence is MPVLLPSTDRDQDSRVGAPEWHQAA. Serine 14 is modified (phosphoserine). Residues 198–229 adopt a coiled-coil conformation; it reads MLVWEREELKSMKRKMEKDMERSEALLKALAS. Positions 265 to 286 are disordered; that stretch reads VDITRPPTPRTQGLKTPPPDPV. Tyrosine 372 carries the post-translational modification Phosphotyrosine. Positions 422–448 form a coiled coil; the sequence is LTRHNLQMEKNLKELRTTHDNLAWSLN.

Microtubule inner protein component of sperm flagellar doublet microtubules.

The protein resides in the cytoplasm. The protein localises to the cytoskeleton. It localises to the flagellum axoneme. In terms of biological role, microtubule inner protein (MIP) part of the dynein-decorated doublet microtubules (DMTs) in sperm flagellar axoneme, which is required for motile flagellum beating. Forms an extensive interaction network cross-linking the lumen of axonemal doublet microtubules. This Rattus norvegicus (Rat) protein is Tektin-like protein 1.